A 486-amino-acid polypeptide reads, in one-letter code: PTS system N-acetylmuramic acid-specific EIIBC component (486 aa).

In terms of domain architecture, PTS EIIB type-1 spans Met1–Gly89. Cys28 functions as the Phosphocysteine intermediate; for EIIB activity in the catalytic mechanism. The PTS EIIC type-1 domain occupies Ser127–Ser486. 10 helical membrane passes run Phe129–Phe149, Leu170–Gly190, Ala196–Asn216, Phe230–Ile250, Met268–Met288, Ala312–Val332, Leu347–Phe367, Gly381–Pro401, Ile411–Gly431, and Ile453–Leu473.

Its subcellular location is the cell inner membrane. It catalyses the reaction N-acetyl-beta-D-muramate(out) + N(pros)-phospho-L-histidyl-[protein] = N-acetyl-beta-D-muramate 6-phosphate(in) + L-histidyl-[protein]. Its function is as follows. The phosphoenolpyruvate-dependent sugar phosphotransferase system (sugar PTS), a major carbohydrate active transport system, catalyzes the phosphorylation of incoming sugar substrates concomitantly with their translocation across the cell membrane. This system is involved in N-acetylmuramic acid (MurNAc) transport, yielding cytoplasmic MurNAc-6-P. Is also able to take up anhydro-N-acetylmuramic acid (anhMurNAc), but cannot phosphorylate the carbon 6, probably because of the 1,6-anhydro ring. The sequence is that of PTS system N-acetylmuramic acid-specific EIIBC component (murP) from Vibrio vulnificus (strain CMCP6).